The primary structure comprises 111 residues: Denmotoxin (111 aa).

An N-terminal signal peptide occupies residues 1-19; the sequence is MKTLLLAVAVVAFVCLGSA. The propeptide occupies 20-34; sequence DQLGLGRQQIDWGQG. At Q35 the chain carries Pyrrolidone carboxylic acid. 5 cysteine pairs are disulfide-bonded: C44–C68, C47–C55, C61–C87, C91–C102, and C103–C108.

In terms of assembly, monomer. As to expression, expressed by the venom gland.

It is found in the secreted. In terms of biological role, this bird-specific postsynaptic neurotoxin irreversibly binds and inhibits the chick muscle alpha-1-beta-1-gamma-delta (CHRNA1-CHRNB1-CHRNG-CHNRD) nicotinic acetylcholine receptor (nAChR) 100-fold more compared with the mouse receptor. The weak binding to mouse receptor is reversible. The sequence is that of Denmotoxin from Boiga dendrophila (Mangrove snake).